The primary structure comprises 338 residues: UPF0252 protein PF1496 (338 aa).

The helical transmembrane segment at 100-120 threads the bilayer; that stretch reads ILSMLFLVFILFPAFTSHIWS.

Belongs to the UPF0252 family.

Its subcellular location is the membrane. The protein is UPF0252 protein PF1496 of Pyrococcus furiosus (strain ATCC 43587 / DSM 3638 / JCM 8422 / Vc1).